The chain runs to 324 residues: Glycerol-3-phosphate dehydrogenase [NAD(P)+] (324 aa).

Residues phenylalanine 11, arginine 31, and lysine 107 each coordinate NADPH. Sn-glycerol 3-phosphate-binding residues include lysine 107 and glycine 135. Alanine 139 lines the NADPH pocket. 5 residues coordinate sn-glycerol 3-phosphate: lysine 190, aspartate 245, serine 255, arginine 256, and asparagine 257. Lysine 190 (proton acceptor) is an active-site residue. Arginine 256 lines the NADPH pocket. The NADPH site is built by valine 278 and glutamate 279.

It belongs to the NAD-dependent glycerol-3-phosphate dehydrogenase family.

It localises to the cytoplasm. It carries out the reaction sn-glycerol 3-phosphate + NAD(+) = dihydroxyacetone phosphate + NADH + H(+). The catalysed reaction is sn-glycerol 3-phosphate + NADP(+) = dihydroxyacetone phosphate + NADPH + H(+). The protein operates within membrane lipid metabolism; glycerophospholipid metabolism. Catalyzes the reduction of the glycolytic intermediate dihydroxyacetone phosphate (DHAP) to sn-glycerol 3-phosphate (G3P), the key precursor for phospholipid synthesis. The polypeptide is Glycerol-3-phosphate dehydrogenase [NAD(P)+] (Anaplasma phagocytophilum (strain HZ)).